A 943-amino-acid polypeptide reads, in one-letter code: Leucine--tRNA ligase (943 aa).

The 'HIGH' region signature appears at 36-46; it reads PYPSGSMHVGH. A 'KMSKS' region motif is present at residues 623–627; that stretch reads KMSSS. Positions 910 to 943 are disordered; that stretch reads ASEVVIHTDPEEAPGPEDRKAGARPLRPGIWLEE. Positions 915–930 are enriched in basic and acidic residues; the sequence is IHTDPEEAPGPEDRKA.

This sequence belongs to the class-I aminoacyl-tRNA synthetase family.

It is found in the cytoplasm. The catalysed reaction is tRNA(Leu) + L-leucine + ATP = L-leucyl-tRNA(Leu) + AMP + diphosphate. This Methanopyrus kandleri (strain AV19 / DSM 6324 / JCM 9639 / NBRC 100938) protein is Leucine--tRNA ligase.